A 484-amino-acid polypeptide reads, in one-letter code: Carbohydrate sulfotransferase 7 (484 aa).

Topologically, residues 1-12 (MKGRRRRRREYC) are cytoplasmic. Residues 13-33 (KFTLLLALYTLLLLLVPSVLD) form a helical; Signal-anchor for type II membrane protein membrane-spanning segment. The Lumenal portion of the chain corresponds to 34-484 (SHSEQDKGRN…PLETKANWAV (451 aa)). Residues 71-90 (RSLAEGNPDRSPGSPGNLSA) are disordered. Residue Asn-87 is glycosylated (N-linked (GlcNAc...) asparagine). 108-114 (WRTGSSF) provides a ligand contact to 3'-phosphoadenylyl sulfate. Asn-184 is a glycosylation site (N-linked (GlcNAc...) asparagine). 276 to 284 (RDPRAVHNS) serves as a coordination point for 3'-phosphoadenylyl sulfate. N-linked (GlcNAc...) asparagine glycosylation occurs at Asn-405. Ser-460 carries the phosphoserine modification. Basic and acidic residues predominate over residues 460–473 (SGDERDRKTVREGE). Residues 460-484 (SGDERDRKTVREGETPLETKANWAV) are disordered.

It belongs to the sulfotransferase 1 family. Gal/GlcNAc/GalNAc subfamily. In terms of tissue distribution, widely expressed. Highly expressed in kidney. Expressed at lower level in heart, lung and liver.

The protein resides in the golgi apparatus membrane. The enzyme catalyses chondroitin beta-D-glucuronate + n 3'-phosphoadenylyl sulfate = chondroitin 6'-sulfate + n adenosine 3',5'-bisphosphate + n H(+). Sulfotransferase that utilizes 3'-phospho-5'-adenylyl sulfate (PAPS) as sulfonate donor to catalyze the transfer of sulfate to position 6 of non-reducing N-acetylglucosamine (GlcNAc) residues. Preferentially acts on mannose-linked GlcNAc. Also able to catalyze the transfer of sulfate to position 6 of the N-acetylgalactosamine (GalNAc) residue of chondroitin. Also acts on core 2 mucin-type oligosaccharide and N-acetyllactosamine oligomer with a lower efficiency. Has weak or no activity toward keratan sulfate and oligosaccharides containing the Galbeta1-4GlcNAc. Catalyzes 6-O-sulfation of beta-benzyl GlcNAc but not alpha- or beta-benzyl GalNAc. The chain is Carbohydrate sulfotransferase 7 (Chst7) from Mus musculus (Mouse).